Consider the following 335-residue polypeptide: LIM and SH3 domain protein F42H10.3 (335 aa).

The LIM zinc-binding domain occupies 5–65 (CAREDCGKTV…DPHYPKTVAS (61 aa)). Nebulin repeat units lie at residues 66-97 (VMADTPEMRRIAENTKNQSNIKYHAEYEKMKG) and 98-132 (TKIEIADDPEMERLKKNTQVQSNVSYHGVLDQKAR). A compositionally biased stretch (basic and acidic residues) spans 128 to 142 (DQKARQEEVRPKEEI). 2 disordered regions span residues 128–151 (DQKARQEEVRPKEEISPNPTPTPI) and 233–264 (DFAGAPPPSSNSISSTSPHSTLSSPQSTISPT). A compositionally biased stretch (low complexity) spans 242 to 260 (SNSISSTSPHSTLSSPQST). An SH3 domain is found at 266–327 (KAGFAVKAIY…PANYVQPHKL (62 aa)).

The sequence is that of LIM and SH3 domain protein F42H10.3 from Caenorhabditis elegans.